The following is a 355-amino-acid chain: Probable butyrate kinase (355 aa).

Belongs to the acetokinase family.

The protein localises to the cytoplasm. The catalysed reaction is butanoate + ATP = butanoyl phosphate + ADP. The protein is Probable butyrate kinase of Listeria monocytogenes serotype 4a (strain HCC23).